The chain runs to 246 residues: UPF0309 protein ABC0887 (246 aa).

One can recognise an SIS domain in the interval 33–212 (MVHAIKEGKS…VLKMIEQLEE (180 aa)).

It belongs to the UPF0309 family.

The chain is UPF0309 protein ABC0887 from Shouchella clausii (strain KSM-K16) (Alkalihalobacillus clausii).